A 20-amino-acid polypeptide reads, in one-letter code: IPCRKAIDVPFGXRYVVXTW.

Its subcellular location is the secreted. The protein localises to the cell wall. This is 23 kDa cell wall protein from Arabidopsis thaliana (Mouse-ear cress).